The chain runs to 218 residues: Histidine biosynthesis bifunctional protein HisIE (218 aa).

The phosphoribosyl-AMP cyclohydrolase stretch occupies residues 1 to 118; sequence MTDLSELNFD…DAPDTGLDGT (118 aa). The phosphoribosyl-ATP pyrophosphohydrolase stretch occupies residues 119-218; sequence LERVYATITE…SGLKGPKEVG (100 aa).

This sequence in the N-terminal section; belongs to the PRA-CH family. In the C-terminal section; belongs to the PRA-PH family.

Its subcellular location is the cytoplasm. It catalyses the reaction 1-(5-phospho-beta-D-ribosyl)-ATP + H2O = 1-(5-phospho-beta-D-ribosyl)-5'-AMP + diphosphate + H(+). The enzyme catalyses 1-(5-phospho-beta-D-ribosyl)-5'-AMP + H2O = 1-(5-phospho-beta-D-ribosyl)-5-[(5-phospho-beta-D-ribosylamino)methylideneamino]imidazole-4-carboxamide. The protein operates within amino-acid biosynthesis; L-histidine biosynthesis; L-histidine from 5-phospho-alpha-D-ribose 1-diphosphate: step 2/9. It functions in the pathway amino-acid biosynthesis; L-histidine biosynthesis; L-histidine from 5-phospho-alpha-D-ribose 1-diphosphate: step 3/9. The sequence is that of Histidine biosynthesis bifunctional protein HisIE (hisI) from Deinococcus radiodurans (strain ATCC 13939 / DSM 20539 / JCM 16871 / CCUG 27074 / LMG 4051 / NBRC 15346 / NCIMB 9279 / VKM B-1422 / R1).